Here is a 511-residue protein sequence, read N- to C-terminus: TNF receptor-associated factor family protein DDB_G0290931 (511 aa).

The RING-type; degenerate zinc finger occupies 27–67 (CPICFELIYKKSIYQCSSGHYACQECWEKSLEIKQECMICR). Positions 103–169 (IDGANQENED…RKLIKDEENG (67 aa)) form a coiled coil. The segment at 107–159 (NQENEDEENEDEENEDDEDENEDEENGEDDEDKDEDEENENENEENKDEENEK) is disordered. The segment covering 109–155 (ENEDEENEDEENEDDEDENEDEENGEDDEDKDEDEENENENEENKDE) has biased composition (acidic residues). 2 consecutive TRAF-type zinc fingers follow at residues 181 to 234 (RHIQ…QVQL) and 236 to 293 (NHYD…SELQ). Positions 324 to 358 (ELLLKEIEKSKITCSELQRKNDELSSLITEIDDNY) form a coiled coil. An MATH domain is found at 374-499 (GYTNKWIISN…DDKLTINIYV (126 aa)).

The protein belongs to the TNF receptor-associated factor family. A subfamily.

It localises to the cytoplasm. Functionally, probable adapter protein and signal transducer that links members of the tumor necrosis factor receptor family to different signaling pathways by association with the receptor cytoplasmic domain and kinases. The chain is TNF receptor-associated factor family protein DDB_G0290931 from Dictyostelium discoideum (Social amoeba).